Here is a 116-residue protein sequence, read N- to C-terminus: Large ribosomal subunit protein bL20 (116 aa).

This sequence belongs to the bacterial ribosomal protein bL20 family.

Its function is as follows. Binds directly to 23S ribosomal RNA and is necessary for the in vitro assembly process of the 50S ribosomal subunit. It is not involved in the protein synthesizing functions of that subunit. The sequence is that of Large ribosomal subunit protein bL20 from Helicobacter pylori (strain G27).